The following is a 259-amino-acid chain: MSRTPIMAGNWKMNLDHVAATSLVQDLGEALKAAGYDSSKSEAVVIPPFTDIRPVAIIIDGDKLPIAYGAQDISAHDDGAYTGEVSGAMLSKLGCRYVVVGHSERREYHNESDELVNAKAKKVIENGMTPIICCGEALEVRKAGKHVEHTVGQIKADLDGIPAEQVAKLVIAYEPIWAIGTGETATADDAQEVCQAIREAVKELYDAPTAEAVRIQYGGSVKPANVAEIMAKPDVDGALVGGASLKAGDFSKIVTFYEA.

10–12 (NWK) is a binding site for substrate. The Electrophile role is filled by His-102. Glu-174 (proton acceptor) is an active-site residue. Substrate is bound by residues Gly-180, Ser-220, and 241–242 (GG).

Belongs to the triosephosphate isomerase family. Homodimer.

The protein localises to the cytoplasm. It carries out the reaction D-glyceraldehyde 3-phosphate = dihydroxyacetone phosphate. It functions in the pathway carbohydrate biosynthesis; gluconeogenesis. The protein operates within carbohydrate degradation; glycolysis; D-glyceraldehyde 3-phosphate from glycerone phosphate: step 1/1. Its function is as follows. Involved in the gluconeogenesis. Catalyzes stereospecifically the conversion of dihydroxyacetone phosphate (DHAP) to D-glyceraldehyde-3-phosphate (G3P). The sequence is that of Triosephosphate isomerase from Cutibacterium acnes (strain DSM 16379 / KPA171202) (Propionibacterium acnes).